Consider the following 470-residue polypeptide: Uronate isomerase (470 aa).

It belongs to the metallo-dependent hydrolases superfamily. Uronate isomerase family.

The catalysed reaction is D-glucuronate = D-fructuronate. It carries out the reaction aldehydo-D-galacturonate = keto-D-tagaturonate. It participates in carbohydrate metabolism; pentose and glucuronate interconversion. The protein is Uronate isomerase of Vibrio vulnificus (strain CMCP6).